Consider the following 412-residue polypeptide: Protein Mb3436c (412 aa).

Residue Lys-227 is modified to N6-(pyridoxal phosphate)lysine.

This sequence belongs to the DegT/DnrJ/EryC1 family.

This is Protein Mb3436c from Mycobacterium bovis (strain ATCC BAA-935 / AF2122/97).